Consider the following 2192-residue polypeptide: BEACH domain-containing protein lvsE (2192 aa).

Disordered regions lie at residues 948–969 (STSL…TSTG), 996–1065 (TTTT…DEPE), 1160–1303 (NESQ…NNLS), and 1343–1363 (DENG…SSSN). Low complexity predominate over residues 996–1049 (TTTTTTTTTTTTTTSTTSNTGNDSPLSIESPISSPVLIENTTNTTNTTTTNTTN). Polar residues predominate over residues 1171–1187 (NIDNLNPNTGLPYNKST). Over residues 1188 to 1231 (NNLSNVNNVNNNNNNNSNNINVSGNNTIGPSSSKSPLRNSRSMS) the composition is skewed to low complexity. The span at 1232–1243 (IGSSATKSPSRQ) shows a compositional bias: polar residues. Composition is skewed to low complexity over residues 1253–1303 (NNNS…NNLS) and 1350–1363 (SSPN…SSSN). Positions 1366 to 1491 (IEEEKFIGSW…ESIQIFNKIV (126 aa)) constitute a BEACH-type PH domain. Positions 1504–1795 (DHPSKIIKKS…QLFSKPHPIR (292 aa)) constitute a BEACH domain. A compositionally biased stretch (low complexity) spans 1823 to 1849 (GTINSSFSSTSTSTSTSSPPPSTLNSP). The interval 1823–1851 (GTINSSFSSTSTSTSTSSPPPSTLNSPQG) is disordered. WD repeat units lie at residues 1973-2012 (FHHD…IKDS), 2022-2061 (SHDE…YQRS), and 2156-2192 (DSPA…VKDL).

In Dictyostelium discoideum (Social amoeba), this protein is BEACH domain-containing protein lvsE (lvsE).